The primary structure comprises 53 residues: MKLTCVLIAAVLLLAVCQLDSADAITRDCKTKGYACFASTECCVQDCWLVCLY.

The first 24 residues, 1–24 (MKLTCVLIAAVLLLAVCQLDSADA), serve as a signal peptide directing secretion. 3 disulfide bridges follow: cysteine 29–cysteine 43, cysteine 36–cysteine 47, and cysteine 42–cysteine 51.

Belongs to the conotoxin O1 superfamily. As to expression, expressed by the venom duct.

It localises to the secreted. Its function is as follows. Probable neurotoxin. This Californiconus californicus (California cone) protein is Conotoxin Cal6.31.